Here is a 647-residue protein sequence, read N- to C-terminus: TNFAIP3-interacting protein 1 (647 aa).

A coiled-coil region spans residues 39–72; the sequence is MQGIKMLGELLEESQMEASRLRQKAEELVKDSEL. Positions 61-71 are enriched in basic and acidic residues; it reads QKAEELVKDSE. A disordered region spans residues 61-168; that stretch reads QKAEELVKDS…DLGPPPPEDS (108 aa). Ser-77 carries the phosphoserine modification. The interaction with Nef stretch occupies residues 95–425; that stretch reads TKVQVHPATS…SPLTRQREYQ (331 aa). Residues 102–115 show a composition bias toward low complexity; the sequence is ATSTAATTTATATT. A compositionally biased stretch (polar residues) spans 143 to 155; the sequence is EEQNSPETGSHPT. A coiled-coil region spans residues 209 to 270; sequence SKVHKNEQRT…KKLLMNSSCK (62 aa). 3 positions are modified to phosphoserine: Ser-297, Ser-416, and Ser-455. Residues 311–551 adopt a coiled-coil conformation; sequence AAEKKVKLLE…KASGERYHME (241 aa). Positions 444 to 601 are required for inhibitory activity of TNF-induced NF-kappa-B activation; sequence ASPSSPPAAF…MEHPPPHPNS (158 aa). The segment at 465–523 is ubiquitin-binding domain (UBD); it reads KQELVTQNELLKQQVKIFEEDFQRERSDRERMNEEKEELKKQVEKLQAQVTLTNAQLKT. A Nuclear localization signal motif is present at residues 537 to 543; it reads QKRKAKA. Residue Tyr-565 is modified to Phosphotyrosine. An Asymmetric dimethylarginine modification is found at Arg-584. Position 612 is an asymmetric dimethylarginine; alternate (Arg-612). Omega-N-methylarginine; alternate is present on Arg-612. The disordered stretch occupies residues 613-647; the sequence is PPCAGIRNQSSQVMDPPPDRPAEPESADNDCDGPQ. A compositionally biased stretch (acidic residues) spans 637 to 647; the sequence is ESADNDCDGPQ. Ser-638 is subject to Phosphoserine.

Interacts with TNFAIP3 and IKBKG (polyubiquitinated); facilitates TNFAIP3-mediated de-ubiquitination of NEMO/IKBKG. Interacts with polyubiquitin. Interacts with MAPK1, SELPLG and PIK3CD. Interacts with IRAK1 (polyubiquitinated). Interacts with MYD88; the interaction is indicative for participation in an activated TLR-signaling complex. Interacts with TAX1BP1. In terms of processing, phosphorylation at Tyr-565 by SRC-family kinases recruits phosphoinositide-3-kinase (PI3K) PIK3CD:p85 heterodimer which results in integrin activation and leukocyte adhesion to activated endothelium during inflammation. Ubiquitous. Abundant in heart and skeletal muscle and expressed at lower levels in thymus, liver, kidney, brain and intestinal tract.

It is found in the cytoplasm. The protein resides in the nucleus. In terms of biological role, inhibits NF-kappa-B activation and TNF-induced NF-kappa-B-dependent gene expression by regulating TAX1BP1 and A20/TNFAIP3-mediated deubiquitination of IKBKG; proposed to link A20/TNFAIP3 to ubiquitinated IKBKG. Involved in regulation of EGF-induced ERK1/ERK2 signaling pathway; blocks MAPK3/MAPK1 nuclear translocation and MAPK1-dependent transcription. Increases cell surface CD4(T4) antigen expression. Involved in the anti-inflammatory response of macrophages and positively regulates TLR-induced activation of CEBPB. Involved in the prevention of autoimmunity; this function implicates binding to polyubiquitin. Involved in leukocyte integrin activation during inflammation; this function is mediated by association with SELPLG and dependent on phosphorylation by SRC-family kinases. The chain is TNFAIP3-interacting protein 1 (Tnip1) from Mus musculus (Mouse).